The chain runs to 414 residues: Gamma-glutamyl phosphate reductase (414 aa).

This sequence belongs to the gamma-glutamyl phosphate reductase family.

It localises to the cytoplasm. The enzyme catalyses L-glutamate 5-semialdehyde + phosphate + NADP(+) = L-glutamyl 5-phosphate + NADPH + H(+). It participates in amino-acid biosynthesis; L-proline biosynthesis; L-glutamate 5-semialdehyde from L-glutamate: step 2/2. In terms of biological role, catalyzes the NADPH-dependent reduction of L-glutamate 5-phosphate into L-glutamate 5-semialdehyde and phosphate. The product spontaneously undergoes cyclization to form 1-pyrroline-5-carboxylate. The protein is Gamma-glutamyl phosphate reductase of Xanthomonas oryzae pv. oryzae (strain MAFF 311018).